An 861-amino-acid chain; its full sequence is Leucine--tRNA ligase (861 aa).

A 'HIGH' region motif is present at residues 42-52 (PYPSGRIHMGH). The 'KMSKS' region signature appears at 623-627 (KMSKS). K626 contacts ATP.

This sequence belongs to the class-I aminoacyl-tRNA synthetase family.

It localises to the cytoplasm. The catalysed reaction is tRNA(Leu) + L-leucine + ATP = L-leucyl-tRNA(Leu) + AMP + diphosphate. This Caulobacter sp. (strain K31) protein is Leucine--tRNA ligase.